Here is a 372-residue protein sequence, read N- to C-terminus: MQKKSTISWSYDAWIVICTLSLLALGLLMVASASMVISDRQFGYPFHYFIRHLIYLSLGLTLAWVASRVPIKVWKTYSGYLFLVGFLLLILVLAPVIGKTVNGSRRWIQLGFISLQVSEVVKFVTILYLASFLQRYQSEVQKELKGFLKPMLLVGILSGLLLLEPDFGAAVVITMTCLALLFLAGVRLWPFCVLLVLVAGSLILLAILSPYRLQRLTSFLNPWAHQFGSGYQLTQSLIAFGRGGLFGVGLGNSVQKLFYLPEAHTDFLFAVLAEELGLIGEILLMGLFVLLIGRIILIGRRAENSNQLYSAYLAYGIALWLGLQVIINIGVTAGVLPTKGLTLPFISYGGSSLLMNCLAIGVILRIAYETEN.

The Cytoplasmic portion of the chain corresponds to 1–12 (MQKKSTISWSYD). The chain crosses the membrane as a helical span at residues 13-33 (AWIVICTLSLLALGLLMVASA). Over 34 to 45 (SMVISDRQFGYP) the chain is Periplasmic. A helical transmembrane segment spans residues 46–66 (FHYFIRHLIYLSLGLTLAWVA). Over 67–77 (SRVPIKVWKTY) the chain is Cytoplasmic. The chain crosses the membrane as a helical span at residues 78–98 (SGYLFLVGFLLLILVLAPVIG). Residues 99-109 (KTVNGSRRWIQ) are Periplasmic-facing. The chain crosses the membrane as a helical span at residues 110 to 130 (LGFISLQVSEVVKFVTILYLA). Topologically, residues 131–142 (SFLQRYQSEVQK) are cytoplasmic. The helical transmembrane segment at 143 to 163 (ELKGFLKPMLLVGILSGLLLL) threads the bilayer. Residues 164-165 (EP) are Periplasmic-facing. A helical membrane pass occupies residues 166–186 (DFGAAVVITMTCLALLFLAGV). Residue arginine 187 is a topological domain, cytoplasmic. A helical membrane pass occupies residues 188–208 (LWPFCVLLVLVAGSLILLAIL). The Periplasmic segment spans residues 209–277 (SPYRLQRLTS…LFAVLAEELG (69 aa)). A helical membrane pass occupies residues 278–298 (LIGEILLMGLFVLLIGRIILI). Residues 299-315 (GRRAENSNQLYSAYLAY) are Cytoplasmic-facing. A helical transmembrane segment spans residues 316–336 (GIALWLGLQVIINIGVTAGVL). Residues 337–342 (PTKGLT) lie on the Periplasmic side of the membrane. Residues 343-363 (LPFISYGGSSLLMNCLAIGVI) form a helical membrane-spanning segment. The Cytoplasmic portion of the chain corresponds to 364–372 (LRIAYETEN).

It belongs to the SEDS family. FtsW subfamily.

The protein resides in the cell inner membrane. It catalyses the reaction [GlcNAc-(1-&gt;4)-Mur2Ac(oyl-L-Ala-gamma-D-Glu-L-Lys-D-Ala-D-Ala)](n)-di-trans,octa-cis-undecaprenyl diphosphate + beta-D-GlcNAc-(1-&gt;4)-Mur2Ac(oyl-L-Ala-gamma-D-Glu-L-Lys-D-Ala-D-Ala)-di-trans,octa-cis-undecaprenyl diphosphate = [GlcNAc-(1-&gt;4)-Mur2Ac(oyl-L-Ala-gamma-D-Glu-L-Lys-D-Ala-D-Ala)](n+1)-di-trans,octa-cis-undecaprenyl diphosphate + di-trans,octa-cis-undecaprenyl diphosphate + H(+). It participates in cell wall biogenesis; peptidoglycan biosynthesis. Its function is as follows. Peptidoglycan polymerase that is essential for cell division. This chain is Probable peptidoglycan glycosyltransferase FtsW, found in Coxiella burnetii (strain RSA 493 / Nine Mile phase I).